Consider the following 172-residue polypeptide: 3-phenylpropionate/cinnamic acid dioxygenase subunit beta (172 aa).

Belongs to the bacterial ring-hydroxylating dioxygenase beta subunit family. In terms of assembly, this dioxygenase system consists of four proteins: the two subunits of the hydroxylase component (HcaE and HcaF), a ferredoxin (HcaC) and a ferredoxin reductase (HcaD).

It carries out the reaction 3-phenylpropanoate + NADH + O2 + H(+) = 3-(cis-5,6-dihydroxycyclohexa-1,3-dien-1-yl)propanoate + NAD(+). It catalyses the reaction (E)-cinnamate + NADH + O2 + H(+) = (2E)-3-(cis-5,6-dihydroxycyclohexa-1,3-dien-1-yl)prop-2-enoate + NAD(+). The protein operates within aromatic compound metabolism; 3-phenylpropanoate degradation. In terms of biological role, part of the multicomponent 3-phenylpropionate dioxygenase. Converts 3-phenylpropionic acid (PP) and cinnamic acid (CI) into 3-phenylpropionate-dihydrodiol (PP-dihydrodiol) and cinnamic acid-dihydrodiol (CI-dihydrodiol), respectively. The sequence is that of 3-phenylpropionate/cinnamic acid dioxygenase subunit beta from Shigella flexneri serotype 5b (strain 8401).